The sequence spans 717 residues: uncharacterized protein (717 aa).

Belongs to the asfivirus C717R family.

It localises to the virion. This is an uncharacterized protein from Ornithodoros (relapsing fever ticks).